A 208-amino-acid polypeptide reads, in one-letter code: V-type ATP synthase subunit D (208 aa).

Belongs to the V-ATPase D subunit family.

In terms of biological role, produces ATP from ADP in the presence of a proton gradient across the membrane. The chain is V-type ATP synthase subunit D from Streptococcus pyogenes serotype M49 (strain NZ131).